The chain runs to 611 residues: UvrABC system protein C (611 aa).

Residues 6 to 84 (NNPGVYRMFN…IKRSRPRFNV (79 aa)) form the GIY-YIG domain. A UVR domain is found at 194-229 (QSVKDHLAAAMQAASADLDFEHAAVYRDRLAALSHV).

It belongs to the UvrC family. In terms of assembly, interacts with UvrB in an incision complex.

Its subcellular location is the cytoplasm. Its function is as follows. The UvrABC repair system catalyzes the recognition and processing of DNA lesions. UvrC both incises the 5' and 3' sides of the lesion. The N-terminal half is responsible for the 3' incision and the C-terminal half is responsible for the 5' incision. The chain is UvrABC system protein C from Brucella suis biovar 1 (strain 1330).